We begin with the raw amino-acid sequence, 126 residues long: Large ribosomal subunit protein bL12 (126 aa).

Belongs to the bacterial ribosomal protein bL12 family. As to quaternary structure, homodimer. Part of the ribosomal stalk of the 50S ribosomal subunit. Forms a multimeric L10(L12)X complex, where L10 forms an elongated spine to which 2 to 4 L12 dimers bind in a sequential fashion. Binds GTP-bound translation factors.

Forms part of the ribosomal stalk which helps the ribosome interact with GTP-bound translation factors. Is thus essential for accurate translation. This chain is Large ribosomal subunit protein bL12, found in Bifidobacterium longum (strain DJO10A).